Consider the following 422-residue polypeptide: Transcription initiation factor TFIID subunit 15b (422 aa).

4 disordered regions span residues 1 to 24, 47 to 94, 111 to 263, and 368 to 422; these read MAGMYNQDGGGGAPIPSYGGDGYG, YGGR…PNPS, ALAP…DAAT, and MAEK…SRPY. Composition is skewed to gly residues over residues 8–24 and 47–83; these read DGGGGAPIPSYGGDGYG and YGGRGGYGGGGGRGNRGGGGGGYQGGDRGGRGSGGGG. A RanBP2-type zinc finger spans residues 84-115; that stretch reads RDGDWRCPNPSCGNVNFARRVECNKCGALAPS. A compositionally biased stretch (gly residues) spans 123 to 133; it reads DRGGGGYSRGG. Positions 134 to 156 are enriched in basic and acidic residues; sequence GDSDRGGGRGGRNDSGRSYESSR. Composition is skewed to gly residues over residues 219-229 and 236-247; these read PSYGGPRGGYG and GGRGGRSGGYDG. Residues 252–263 are compositionally biased toward basic and acidic residues; it reads RRQEASYEDAAT. Residues 280–371 enclose the RRM domain; sequence ARIYISNLPP…NKISVTMAEK (92 aa). The span at 382–397 shows a compositional bias: gly residues; sequence RGGGRGGGGGGYGGGG.

It belongs to the TAF15 family. As to quaternary structure, component of the TFIID complex. TFIID is composed of TATA binding protein (TBP) and a number of TBP-associated factors (TAFs) whose MWs range from 14-217 kDa. Interacts with TAF4, TAF4B, TAF5, TAF12B and TAF14. Expressed in roots, leaves and inflorescences.

It is found in the nucleus. Its function is as follows. TAFs are components of the transcription factor IID (TFIID) complex that is essential for mediating regulation of RNA polymerase transcription. This is Transcription initiation factor TFIID subunit 15b (TAF15B) from Arabidopsis thaliana (Mouse-ear cress).